A 225-amino-acid chain; its full sequence is Uracil phosphoribosyltransferase (225 aa).

36–40 (KGLVR) is a binding site for GTP. 5-phospho-alpha-D-ribose 1-diphosphate is bound by residues arginine 86, arginine 111, and 145-153 (DPMLATGST). Uracil is bound by residues isoleucine 210 and 215–217 (GDA). Residue aspartate 216 participates in 5-phospho-alpha-D-ribose 1-diphosphate binding.

Belongs to the UPRTase family. The cofactor is Mg(2+).

It catalyses the reaction UMP + diphosphate = 5-phospho-alpha-D-ribose 1-diphosphate + uracil. Its pathway is pyrimidine metabolism; UMP biosynthesis via salvage pathway; UMP from uracil: step 1/1. Its activity is regulated as follows. Allosterically activated by GTP. Its function is as follows. Catalyzes the conversion of uracil and 5-phospho-alpha-D-ribose 1-diphosphate (PRPP) to UMP and diphosphate. The chain is Uracil phosphoribosyltransferase from Haloarcula marismortui (strain ATCC 43049 / DSM 3752 / JCM 8966 / VKM B-1809) (Halobacterium marismortui).